Reading from the N-terminus, the 268-residue chain is Nickel import ATP-binding protein NikE (268 aa).

An ABC transporter domain is found at Leu-4–Asn-252. Gly-45–Ser-52 provides a ligand contact to ATP.

It belongs to the ABC transporter superfamily. Nickel importer (TC 3.A.1.5.3) family. In terms of assembly, the complex is composed of two ATP-binding proteins (NikD and NikE), two transmembrane proteins (NikB and NikC) and a solute-binding protein (NikA).

The protein localises to the cell inner membrane. The catalysed reaction is Ni(2+)(out) + ATP + H2O = Ni(2+)(in) + ADP + phosphate + H(+). Part of the ABC transporter complex NikABCDE involved in nickel import. Responsible for energy coupling to the transport system. The polypeptide is Nickel import ATP-binding protein NikE (Escherichia coli (strain K12)).